The sequence spans 312 residues: Small ribosomal subunit protein uS2 (312 aa).

Belongs to the universal ribosomal protein uS2 family.

The chain is Small ribosomal subunit protein uS2 from Ruthia magnifica subsp. Calyptogena magnifica.